The following is a 7705-amino-acid chain: Copine family protein 2 (7705 aa).

Disordered regions lie at residues 1–61 (MNDY…RHSE), 269–360 (KEGN…NNSQ), 372–408 (SERK…HQQP), 464–492 (GDRA…TSSV), 506–538 (STEP…TADG), 560–614 (DERA…QGPP), 1301–1358 (NRSE…DQQV), 4381–4427 (ELEP…RSES), and 6779–6800 (RDEH…GKFT). The span at 12 to 25 (SSQKSNNQKISNNS) shows a compositional bias: low complexity. Basic and acidic residues predominate over residues 269–282 (KEGNNPSCCRERGT). The segment covering 302-313 (STSTKVAVTSAS) has biased composition (low complexity). The segment covering 318 to 336 (IKDHKKQLKKEKEKKKKMD) has biased composition (basic residues). A compositionally biased stretch (basic and acidic residues) spans 372–404 (SERKTAKQREQELLQRSERRSGGRTHSHEEYRR). Residues 522 to 532 (ASLSSVQQKQP) show a composition bias toward polar residues. Residues 560-587 (DERAKDFLRGDRSSRLSPQSERKNERQI) show a composition bias toward basic and acidic residues. Polar residues predominate over residues 588–597 (QIRQQSSGPT). 2 stretches are compositionally biased toward basic and acidic residues: residues 598 to 611 (NRRE…EKRQ) and 1301 to 1335 (NRSE…HTSE). Over residues 4397-4409 (RQSRVYRSSSQVR) the composition is skewed to low complexity. 2 stretches are compositionally biased toward basic and acidic residues: residues 4411-4427 (PSEE…RSES) and 6779-6797 (RDEH…RDGG). The VWFA domain occupies 7475–7673 (NLIFGIDYTK…FHKVMFNAPN (199 aa)).

The protein belongs to the copine family. In terms of tissue distribution, expressed in body wall muscle.

The sequence is that of Copine family protein 2 (cpna-2) from Caenorhabditis elegans.